Reading from the N-terminus, the 286-residue chain is ATP synthase gamma chain (286 aa).

This sequence belongs to the ATPase gamma chain family. As to quaternary structure, F-type ATPases have 2 components, CF(1) - the catalytic core - and CF(0) - the membrane proton channel. CF(1) has five subunits: alpha(3), beta(3), gamma(1), delta(1), epsilon(1). CF(0) has three main subunits: a, b and c.

It localises to the cell membrane. Functionally, produces ATP from ADP in the presence of a proton gradient across the membrane. The gamma chain is believed to be important in regulating ATPase activity and the flow of protons through the CF(0) complex. The chain is ATP synthase gamma chain from Mycoplasma mobile (strain ATCC 43663 / 163K / NCTC 11711) (Mesomycoplasma mobile).